A 172-amino-acid chain; its full sequence is Co-chaperone protein HscB homolog (172 aa).

The J domain maps to 2–69; it reads NHFELFNLPV…DSRAAYLLAL (68 aa).

It belongs to the HscB family. As to quaternary structure, interacts with HscA and stimulates its ATPase activity.

In terms of biological role, co-chaperone involved in the maturation of iron-sulfur cluster-containing proteins. Seems to help targeting proteins to be folded toward HscA. The polypeptide is Co-chaperone protein HscB homolog (Acinetobacter baumannii (strain AB307-0294)).